Consider the following 519-residue polypeptide: Maturase K (519 aa).

This sequence belongs to the intron maturase 2 family. MatK subfamily.

The protein resides in the plastid. It localises to the chloroplast. Its function is as follows. Usually encoded in the trnK tRNA gene intron. Probably assists in splicing its own and other chloroplast group II introns. The polypeptide is Maturase K (Keteleeria davidiana (David's keteleeria)).